A 346-amino-acid polypeptide reads, in one-letter code: UDP-N-acetylenolpyruvoylglucosamine reductase (346 aa).

Residues 18 to 189 (LRAQARAFIA…VSVVFALKTH (172 aa)) enclose the FAD-binding PCMH-type domain. Arg165 is a catalytic residue. Ser240 (proton donor) is an active-site residue. Glu336 is an active-site residue.

This sequence belongs to the MurB family. FAD serves as cofactor.

Its subcellular location is the cytoplasm. It catalyses the reaction UDP-N-acetyl-alpha-D-muramate + NADP(+) = UDP-N-acetyl-3-O-(1-carboxyvinyl)-alpha-D-glucosamine + NADPH + H(+). It participates in cell wall biogenesis; peptidoglycan biosynthesis. Its function is as follows. Cell wall formation. The polypeptide is UDP-N-acetylenolpyruvoylglucosamine reductase (Neisseria meningitidis serogroup B (strain ATCC BAA-335 / MC58)).